Reading from the N-terminus, the 506-residue chain is Maturase K (506 aa).

This sequence belongs to the intron maturase 2 family. MatK subfamily.

The protein localises to the plastid. Its subcellular location is the chloroplast. In terms of biological role, usually encoded in the trnK tRNA gene intron. Probably assists in splicing its own and other chloroplast group II introns. The sequence is that of Maturase K from Pisum sativum (Garden pea).